We begin with the raw amino-acid sequence, 813 residues long: Ribonuclease R (813 aa).

One can recognise an RNB domain in the interval 260-587 (RVDLRDLPLV…LHRAIKYLLA (328 aa)). Position 544 is an N6-acetyllysine; by PatZ (Lys-544). The S1 motif domain maps to 644–725 (GNVFKGVISS…DERKIDFSLI (82 aa)). Residues 731-813 (PRNVGKTARE…KRAAKKKVAE (83 aa)) form a disordered region. Composition is skewed to basic and acidic residues over residues 737-749 (TAREKAKKGDAGK) and 761-774 (VNFEPDSAFRGEKK). The span at 775 to 791 (TKPKAAKKDARKAKKPS) shows a compositional bias: basic residues. Over residues 792-801 (AKTQKIAAAT) the composition is skewed to low complexity. Over residues 802–813 (KAKRAAKKKVAE) the composition is skewed to basic residues.

Belongs to the RNR ribonuclease family. RNase R subfamily. As to quaternary structure, monomer. It depends on Mg(2+) as a cofactor. Post-translationally, acetylated at Lys-544 by PatZ during exponential growth phase. Acetylation alters RNase R structure and enhances binding of SsrA/tmRNA and SmpB, leading to instability and degradation of RNase R. Not acetylated and stable in stationary phase cells.

It localises to the cytoplasm. It catalyses the reaction Exonucleolytic cleavage in the 3'- to 5'-direction to yield nucleoside 5'-phosphates.. Its activity is regulated as follows. Stimulated by the presence of a monovalent cation. Highly unstable in exponential growth phase. This instability is due to the binding of SsrA/tmRNA and its associated protein SmpB to the C-terminal region of RNase R. In contrast, RNase R becomes stabilized upon entry into stationary phase. The difference in stability between exponential and stationary phase is due to the acetylation of a single lysine residue. In terms of biological role, 3'-5' exoribonuclease that releases 5'-nucleoside monophosphates and is involved in maturation of structured RNAs (rRNAs, tRNAs and SsrA/tmRNA). In stationary phase, involved in the post-transcriptional regulation of ompA mRNA stability. Shortens RNA processively to di- and trinucleotides. In vitro, exhibits helicase activity, which is independent of its RNase activity. RNases 2 and R (rnb and this entry) contribute to rRNA degradation during starvation, while RNase R and PNPase (this entry and pnp) are the major contributors to quality control of rRNA during steady state growth. Required for the expression of virulence genes in enteroinvasive strains of E.coli. The polypeptide is Ribonuclease R (rnr) (Escherichia coli (strain K12)).